The chain runs to 394 residues: Elongation factor Tu 2 (394 aa).

The 195-residue stretch at Lys-10–Glu-204 folds into the tr-type G domain. The interval Gly-19–Thr-26 is G1. Gly-19–Thr-26 lines the GTP pocket. Thr-26 serves as a coordination point for Mg(2+). The interval Gly-60–Ser-64 is G2. The interval Asp-81 to Gly-84 is G3. GTP is bound by residues Asp-81–His-85 and Asn-136–Asp-139. A G4 region spans residues Asn-136 to Asp-139. The tract at residues Ser-174 to Leu-176 is G5.

Belongs to the TRAFAC class translation factor GTPase superfamily. Classic translation factor GTPase family. EF-Tu/EF-1A subfamily. Monomer.

Its subcellular location is the cytoplasm. It catalyses the reaction GTP + H2O = GDP + phosphate + H(+). Its function is as follows. GTP hydrolase that promotes the GTP-dependent binding of aminoacyl-tRNA to the A-site of ribosomes during protein biosynthesis. This Photobacterium profundum (strain SS9) protein is Elongation factor Tu 2.